A 321-amino-acid chain; its full sequence is Glucokinase (321 aa).

Position 8–13 (8–13) interacts with ATP; it reads GDVGGT.

This sequence belongs to the bacterial glucokinase family.

It is found in the cytoplasm. The enzyme catalyses D-glucose + ATP = D-glucose 6-phosphate + ADP + H(+). The polypeptide is Glucokinase (Salmonella heidelberg (strain SL476)).